The primary structure comprises 187 residues: GTP cyclohydrolase 1 1 (187 aa).

The protein belongs to the GTP cyclohydrolase I family. In terms of assembly, homomer.

The catalysed reaction is GTP + H2O = 7,8-dihydroneopterin 3'-triphosphate + formate + H(+). It functions in the pathway cofactor biosynthesis; 7,8-dihydroneopterin triphosphate biosynthesis; 7,8-dihydroneopterin triphosphate from GTP: step 1/1. The sequence is that of GTP cyclohydrolase 1 1 from Pseudomonas syringae pv. tomato (strain ATCC BAA-871 / DC3000).